Reading from the N-terminus, the 60-residue chain is Large ribosomal subunit protein bL32 (60 aa).

Residues Met-1 to Asp-60 form a disordered region. Residues Lys-7–Arg-16 show a composition bias toward basic residues.

The protein belongs to the bacterial ribosomal protein bL32 family.

The protein is Large ribosomal subunit protein bL32 of Francisella philomiragia subsp. philomiragia (strain ATCC 25017 / CCUG 19701 / FSC 153 / O#319-036).